Consider the following 233-residue polypeptide: Phosphoribosylformylglycinamidine synthase subunit PurQ (233 aa).

Residues S3–A233 enclose the Glutamine amidotransferase type-1 domain. The active-site Nucleophile is the C87. Active-site residues include H204 and E206.

In terms of assembly, part of the FGAM synthase complex composed of 1 PurL, 1 PurQ and 2 PurS subunits.

Its subcellular location is the cytoplasm. It catalyses the reaction N(2)-formyl-N(1)-(5-phospho-beta-D-ribosyl)glycinamide + L-glutamine + ATP + H2O = 2-formamido-N(1)-(5-O-phospho-beta-D-ribosyl)acetamidine + L-glutamate + ADP + phosphate + H(+). It carries out the reaction L-glutamine + H2O = L-glutamate + NH4(+). It participates in purine metabolism; IMP biosynthesis via de novo pathway; 5-amino-1-(5-phospho-D-ribosyl)imidazole from N(2)-formyl-N(1)-(5-phospho-D-ribosyl)glycinamide: step 1/2. Its function is as follows. Part of the phosphoribosylformylglycinamidine synthase complex involved in the purines biosynthetic pathway. Catalyzes the ATP-dependent conversion of formylglycinamide ribonucleotide (FGAR) and glutamine to yield formylglycinamidine ribonucleotide (FGAM) and glutamate. The FGAM synthase complex is composed of three subunits. PurQ produces an ammonia molecule by converting glutamine to glutamate. PurL transfers the ammonia molecule to FGAR to form FGAM in an ATP-dependent manner. PurS interacts with PurQ and PurL and is thought to assist in the transfer of the ammonia molecule from PurQ to PurL. This is Phosphoribosylformylglycinamidine synthase subunit PurQ from Nitrobacter hamburgensis (strain DSM 10229 / NCIMB 13809 / X14).